A 200-amino-acid chain; its full sequence is Protein C2-DOMAIN ABA-RELATED 5 (200 aa).

Residues 22-142 (VAGEKHKDRR…LKMHLHDLPS (121 aa)) form the C2 domain. Arg57, Asp58, Asp63, Asp109, Tyr110, Asp111, and Asp117 together coordinate Ca(2+).

This sequence belongs to the plant CAR protein family. Binds to PYR/PYL/RCAR abscisic acid intracellular receptors in an ABA-independent manner, both at the plasma membrane and in the nucleus.

The protein resides in the cell membrane. The protein localises to the nucleus. In terms of biological role, stimulates the GTPase/ATPase activities of Obg-like ATPases. Mediates the transient calcium-dependent interaction of PYR/PYL/RCAR abscisic acid (ABA) receptors with the plasma membrane and thus regulates ABA sensitivity. In Arabidopsis thaliana (Mouse-ear cress), this protein is Protein C2-DOMAIN ABA-RELATED 5.